Reading from the N-terminus, the 267-residue chain is MEKVTIRDFLKKKEKKEKIIMLTAYDYPSAKIISQTNLDGILVGDSLGMVVLGKENTLKVTMRDMLIHLDAVVKAKPPQLIVADMPFLSYETSIKDAVKNAGLLARHGADAVKLEGGEEMRDVVRAIVRAGIPVMGHIGLTPQRFLRIGGYRILGKREKEEEQLLKDAKTLEEAGAFSIVIENTYSDVAKKITESISIPTICIGAGPYCDGQILVIHDLLGLSDFTPYFAKKYIDLRGLIRRAIEDYISEVKEGKFPGKEHYKSRDS.

The Mg(2+) site is built by Asp-45 and Asp-84. 3-methyl-2-oxobutanoate contacts are provided by residues 45–46 (DS), Asp-84, and Lys-113. Glu-115 lines the Mg(2+) pocket. The active-site Proton acceptor is the Glu-182.

It belongs to the PanB family. As to quaternary structure, homodecamer; pentamer of dimers. Mg(2+) serves as cofactor.

The protein localises to the cytoplasm. It catalyses the reaction 3-methyl-2-oxobutanoate + (6R)-5,10-methylene-5,6,7,8-tetrahydrofolate + H2O = 2-dehydropantoate + (6S)-5,6,7,8-tetrahydrofolate. Its pathway is cofactor biosynthesis; coenzyme A biosynthesis. Catalyzes the reversible reaction in which hydroxymethyl group from 5,10-methylenetetrahydrofolate is transferred onto alpha-ketoisovalerate to form ketopantoate. This chain is 3-methyl-2-oxobutanoate hydroxymethyltransferase, found in Sulfurisphaera tokodaii (strain DSM 16993 / JCM 10545 / NBRC 100140 / 7) (Sulfolobus tokodaii).